We begin with the raw amino-acid sequence, 1259 residues long: Ankyrin repeat and sterile alpha motif domain-containing protein 1B (1259 aa).

7 ANK repeats span residues 2–31 (GKDQELLEAARTGNVALVEKLLSGRKGGIL), 58–87 (SGYTALHHAALNGHKDIVLKLLQYEASTNV), 91–120 (KGYFPIHLAAWKGDVEIVKILIHHGPSHSR), 127–156 (ENETALHCAAQYGHSEVVAVLLEELTDPTI), 160–189 (KLETPLDLAALYGRLRVVKMIISAHPNLMS), 193–222 (RKHTPLHLAARNGHKAVVQVLLEAGMDVSC), and 225–254 (EKGSALHEAALFGKVDVVRVLLETGIDANI). The tract at residues 298–325 (HAQEDTAQETHLSSPAESPQKTKSETVT) is disordered. Residues 306 to 325 (ETHLSSPAESPQKTKSETVT) are compositionally biased toward polar residues. Residues Ser310, Ser311, Ser315, Ser353, and Ser364 each carry the phosphoserine modification. Disordered stretches follow at residues 367-401 (ELGKNGSQSVRTSSTINLSPGEVEDEEEDPNSCGP), 490-513 (PGTSHHRNSSTGPTPDCSPPSPDT), 556-614 (CTSF…GSSP), and 631-661 (TCEDGPDEASLANSPLPFKQTPIENNPEPSV). Over residues 371 to 384 (NGSQSVRTSSTINL) the composition is skewed to polar residues. Thr503 is modified (phosphothreonine). Ser507 and Ser510 each carry phosphoserine. Over residues 556 to 574 (CTSFTSSPAASPPTSSVET) the composition is skewed to low complexity. Residues 575–587 (TEVKNEGAEHADD) are compositionally biased toward basic and acidic residues. Ser738 is modified (phosphoserine). The segment at 753–776 (VNWSKSSTAERSSKDNSERTPSFT) is disordered. Thr772 carries the post-translational modification Phosphothreonine. The residue at position 774 (Ser774) is a Phosphoserine. 2 consecutive SAM domains span residues 809-875 (CPVQ…LPKM) and 883-948 (YHPT…RLHD). Position 900 is a phosphotyrosine (Tyr900). Position 934 (His934) is a short sequence motif, nuclear localization signal. Residues 943–988 (GDRLHDDPPQKPPRSITLREPSGNHTPPQLSPSLSQSTYTTGGSLD) are disordered. The segment covering 968 to 983 (TPPQLSPSLSQSTYTT) has biased composition (low complexity). Ser973 is modified (phosphoserine). Tyr1006 is subject to Phosphotyrosine. The PID domain maps to 1055 to 1212 (IFQSCDYKAF…SFENKPSKPI (158 aa)). Residues 1196-1216 (HSSTLPESFENKPSKPIPKPR) are disordered.

Interacts with EPHA8. Isoform 2 interacts with COIL.

It localises to the cytoplasm. The protein localises to the nucleus. The protein resides in the postsynaptic density. It is found in the cell projection. Its subcellular location is the dendritic spine. In terms of biological role, isoform 2 may participate in the regulation of nucleoplasmic coilin protein interactions in neuronal and transformed cells. This chain is Ankyrin repeat and sterile alpha motif domain-containing protein 1B (Anks1b), found in Mus musculus (Mouse).